The following is a 533-amino-acid chain: Tyrosinase (533 aa).

The signal sequence occupies residues 1 to 18 (MFLAVLYCLLWSFQISDG). Topologically, residues 19–476 (HFPRACASSK…YLEQASRIWP (458 aa)) are lumenal, melanosome. Asparagine 86, asparagine 111, and asparagine 161 each carry an N-linked (GlcNAc...) asparagine glycan. Cu cation contacts are provided by histidine 180, histidine 202, and histidine 211. 2 N-linked (GlcNAc...) asparagine glycosylation sites follow: asparagine 230 and asparagine 337. Positions 363 and 367 each coordinate Cu cation. The N-linked (GlcNAc...) asparagine glycan is linked to asparagine 371. Residue histidine 390 coordinates Cu cation. A helical transmembrane segment spans residues 477 to 497 (WLLGAALVGAVIAAALSGLSS). Topologically, residues 498–533 (RLCLQKKKKKKQPQEERQPLLMDKDDYHSLLYQSHL) are cytoplasmic.

The protein belongs to the tyrosinase family. As to quaternary structure, forms an OPN3-dependent complex with DCT in response to blue light in melanocytes. Cu(2+) is required as a cofactor. Glycosylated. Expressed in the skin.

It localises to the melanosome membrane. The protein localises to the melanosome. It carries out the reaction 2 L-dopa + O2 = 2 L-dopaquinone + 2 H2O. It catalyses the reaction L-tyrosine + O2 = L-dopaquinone + H2O. The catalysed reaction is 2 5,6-dihydroxyindole-2-carboxylate + O2 = 2 indole-5,6-quinone-2-carboxylate + 2 H2O. Its function is as follows. This is a copper-containing oxidase that functions in the formation of pigments such as melanins and other polyphenolic compounds. Catalyzes the initial and rate limiting step in the cascade of reactions leading to melanin production from tyrosine. In addition to hydroxylating tyrosine to DOPA (3,4-dihydroxyphenylalanine), also catalyzes the oxidation of DOPA to DOPA-quinone, and possibly the oxidation of DHI (5,6-dihydroxyindole) to indole-5,6 quinone. This is Tyrosinase (Tyr) from Mus musculus (Mouse).